The primary structure comprises 2998 residues: Probable polyketide synthase 14 (2998 aa).

Residues 19-456 (EDDIAIIGIG…GSNCCLILSE (438 aa)) form the Ketosynthase family 3 (KS3) domain. Catalysis depends on for beta-ketoacyl synthase activity residues C189, H331, and H376. An acyl/malonyl transferase region spans residues 657–690 (GIEASFIVGHSLGEIPAAYCSGMITLDTLCYLIY). S667 acts as the For acyl/malonyl transferase activity in catalysis. Positions 962–1084 (IDQLGFSLIE…GNFQLFTSGN (123 aa)) are N-terminal hotdog fold. Positions 962 to 1249 (IDQLGFSLIE…CKSLTIIKDS (288 aa)) constitute a PKS/mFAS DH domain. Residue H996 is the Proton acceptor; for dehydratase activity of the active site. A C-terminal hotdog fold region spans residues 1101–1249 (NLTKLTKNEL…CKSLTIIKDS (149 aa)). The active-site Proton donor; for dehydratase activity is the D1159. A helical transmembrane segment spans residues 1979-1999 (SILIHSGSGGIGLSALNILKW). The Carrier domain maps to 2476–2553 (ENDTSIDSLF…SSIKLITNQL (78 aa)). At S2513 the chain carries O-(pantetheine 4'-phosphoryl)serine. Residues 2559–2578 (DGQQQQHRQNKKNNNIPENK) are disordered. Over residues 2561-2573 (QQQQHRQNKKNNN) the composition is skewed to low complexity. A helical transmembrane segment spans residues 2621-2641 (IFLTGSTGFLGAYLLWYLIQM).

The cofactor is pantetheine 4'-phosphate.

The protein resides in the membrane. Functionally, probable polyketide synthase. The protein is Probable polyketide synthase 14 (pks14) of Dictyostelium discoideum (Social amoeba).